Reading from the N-terminus, the 494-residue chain is 3-octaprenyl-4-hydroxybenzoate carboxy-lyase (494 aa).

Asparagine 172 lines the Mn(2+) pocket. Residues 175–177 (IYR), 189–191 (RWL), and 194–195 (RG) contribute to the prenylated FMN site. Residue glutamate 238 participates in Mn(2+) binding. The active-site Proton donor is aspartate 294.

It belongs to the UbiD family. In terms of assembly, homohexamer. The cofactor is prenylated FMN. Mn(2+) is required as a cofactor.

The protein localises to the cell membrane. It catalyses the reaction a 4-hydroxy-3-(all-trans-polyprenyl)benzoate + H(+) = a 2-(all-trans-polyprenyl)phenol + CO2. It functions in the pathway cofactor biosynthesis; ubiquinone biosynthesis. Catalyzes the decarboxylation of 3-octaprenyl-4-hydroxy benzoate to 2-octaprenylphenol, an intermediate step in ubiquinone biosynthesis. In Herminiimonas arsenicoxydans, this protein is 3-octaprenyl-4-hydroxybenzoate carboxy-lyase.